The sequence spans 501 residues: 2-isopropylmalate synthase (501 aa).

In terms of domain architecture, Pyruvate carboxyltransferase spans 7–269 (VRIFDTTLRD…QTQIKTEEIA (263 aa)). Mn(2+) contacts are provided by Asp16, His204, His206, and Asn240. Residues 394 to 501 (QLEGFTVSTG…RAYISALNRL (108 aa)) form a regulatory domain region.

It belongs to the alpha-IPM synthase/homocitrate synthase family. LeuA type 1 subfamily. As to quaternary structure, homodimer. Requires Mn(2+) as cofactor.

The protein localises to the cytoplasm. The catalysed reaction is 3-methyl-2-oxobutanoate + acetyl-CoA + H2O = (2S)-2-isopropylmalate + CoA + H(+). The protein operates within amino-acid biosynthesis; L-leucine biosynthesis; L-leucine from 3-methyl-2-oxobutanoate: step 1/4. Functionally, catalyzes the condensation of the acetyl group of acetyl-CoA with 3-methyl-2-oxobutanoate (2-ketoisovalerate) to form 3-carboxy-3-hydroxy-4-methylpentanoate (2-isopropylmalate). This Leptospira interrogans serogroup Icterohaemorrhagiae serovar copenhageni (strain Fiocruz L1-130) protein is 2-isopropylmalate synthase.